Reading from the N-terminus, the 184-residue chain is Bcl-2-modifying factor (184 aa).

Residues 67–75 (DKATQTLSP) form an interaction with DLC2 region. A BH3 motif is present at residues 133-147 (IARKLQCIADQFHRL).

Belongs to the Bcl-2 family. In terms of assembly, interacts with MCL1, BCL2, BCL2L1/BCL-Xl, BCL2A1 and BCL2L2/BCL-w. Interacts with the myosin V actin motor complex through its binding to DLC2. As to expression, isoform 1 is mainly expressed in B-lymphoid cells. Isoform 2 and isoform 3 are mainly expressed in B-CLL and normal B-cells.

Its function is as follows. May play a role in apoptosis. Isoform 1 seems to be the main initiator. This chain is Bcl-2-modifying factor (BMF), found in Homo sapiens (Human).